The sequence spans 1020 residues: LLGL scribble cell polarity complex component 2 (1020 aa).

14 WD repeats span residues 36–69 (SALG…FMGL), 76–117 (VTQI…DESF), 132–169 (ITVV…DRTI), 193–227 (ALQE…LYHF), 233–268 (LENI…QPEP), 282–324 (AITR…GQQT), 332–366 (VIGF…VIDL), 388–464 (TCSH…YKLS), 508–583 (QKIF…FVLV), 592–653 (TSLA…LRQS), 713–769 (VRTL…KEIQ), 778–830 (GILV…VSAK), 835–888 (LTAL…VRYS), and 902–925 (VFTK…SLST). Phosphoserine is present on Ser-653. Positions 653–669 (SFRRMRRSRVSSRKRHP) are enriched in basic residues. The interval 653 to 689 (SFRRMRRSRVSSRKRHPAGPPGEAQEGSAKAERPGLQ) is disordered. Disordered regions lie at residues 938–975 (AETK…PGLV) and 992–1020 (STLE…GGAE). Phosphoserine is present on residues Ser-965 and Ser-1015.

This sequence belongs to the WD repeat L(2)GL family. In terms of assembly, interacts with GPSM2/LGN, PRKCI/aPKC and PARD6B/Par-6. The complex is enhanced during mitosis. Interacts with DCAF1. In terms of processing, phosphorylated at Ser-653 by PRKCI. Phosphorylation is enhanced during cell polarization induced by calcium. Phosphorylation may occur during the cell-cell contact-induced cell polarization and may contribute to the segregation of LLGL2 from the PRKCI/aPKC and PARD6B/Par-6 complex.

It localises to the cytoplasm. Part of a complex with GPSM2/LGN, PRKCI/aPKC and PARD6B/Par-6, which may ensure the correct organization and orientation of bipolar spindles for normal cell division. This complex plays roles in the initial phase of the establishment of epithelial cell polarity. The protein is LLGL scribble cell polarity complex component 2 (LLGL2) of Homo sapiens (Human).